Reading from the N-terminus, the 105-residue chain is uncharacterized protein (105 aa).

2 helical membrane passes run Asn-26–Ile-46 and Ser-66–Ile-86.

The protein resides in the cell membrane. This is an uncharacterized protein from Mycoplasma pneumoniae (strain ATCC 29342 / M129 / Subtype 1) (Mycoplasmoides pneumoniae).